The following is a 602-amino-acid chain: MNANNLLQAAIFIVVLIAAAVPVARYLTRVMDGSSAVVRVFGPLERALYRLAGIDPLTEMSWKQYALATVAFNALGVLFLYALLRVQGWLPGNPQGFGPMTVDGALNTAVSFVTNTNWQDYTPEQTVSYLAQMLGLTVQNFLSAATGIVVVLALIRGFARHTAQTIGNFWVDVTRVTLYVLVPMAAIIAALLMSQGVIQNTKAYQDVPTLQTTSYAAPRLDAQGNPVKDAKGNPVTVQTSVKAQTLAMGPVASQEAIKMLGTNGGGFFNGNSSHPYENPTPFSNFLEIFAILIIPAALCLVFGNTIGDRRQGVAVLAAMTVALAAAIGIETSAEQGGTPVLASLNVDQAASPLQAGGNMEGKETRFGIAQTGLFVVATTAASCGAVDAMHDSLTPVGGLVPMLLMQLGEVIFGGVGSGLYGMLVFALLAVFVAGLMIGRTPEYVGKKIESYEMKMVSIVVLLTPLLVLVGTSIAVLADAGRAGIANPGPHGFSEILYAFSSAANNNGSAFGGLSVNTPFYNWMTAIAMWFGRFGTIVPVLAIAGSLAAKKRIAATSGTLPTHGPLFVVLLLGTVLLVGALTYMPALALGPGVEHLMLFVGAH.

Helical transmembrane passes span 3–23 (ANNL…AVPV), 64–84 (QYAL…YALL), 135–155 (GLTV…LALI), 178–198 (LYVL…QGVI), 282–302 (FSNF…CLVF), 313–333 (VAVL…ETSA), 418–438 (GLYG…LMIG), 456–476 (VSIV…IAVL), 522–542 (WMTA…VLAI), and 565–585 (LFVV…YMPA).

The protein belongs to the KdpA family. In terms of assembly, the system is composed of three essential subunits: KdpA, KdpB and KdpC.

It localises to the cell inner membrane. Part of the high-affinity ATP-driven potassium transport (or Kdp) system, which catalyzes the hydrolysis of ATP coupled with the electrogenic transport of potassium into the cytoplasm. This subunit binds the periplasmic potassium ions and delivers the ions to the membrane domain of KdpB through an intramembrane tunnel. This Burkholderia mallei (strain ATCC 23344) protein is Potassium-transporting ATPase potassium-binding subunit.